Here is a 216-residue protein sequence, read N- to C-terminus: Large ribosomal subunit protein bL25 (216 aa).

The interval 184–216 is disordered; it reads VPPTSDVEEEEGDEDLEEDVEETAAEEEEGVEE. Positions 189-216 are enriched in acidic residues; it reads DVEEEEGDEDLEEDVEETAAEEEEGVEE.

It belongs to the bacterial ribosomal protein bL25 family. CTC subfamily. In terms of assembly, part of the 50S ribosomal subunit; part of the 5S rRNA/L5/L18/L25 subcomplex. Contacts the 5S rRNA. Binds to the 5S rRNA independently of L5 and L18.

In terms of biological role, this is one of the proteins that binds to the 5S RNA in the ribosome where it forms part of the central protuberance. This is Large ribosomal subunit protein bL25 from Desulforapulum autotrophicum (strain ATCC 43914 / DSM 3382 / VKM B-1955 / HRM2) (Desulfobacterium autotrophicum).